The sequence spans 370 residues: Cytoplasmic envelopment protein 2 (370 aa).

Belongs to the herpesviridae cytoplasmic envelopment protein 2 family. As to quaternary structure, interacts with cytoplasmic envelopment protein 3 and with the capsid.

The protein localises to the virion tegument. Its subcellular location is the host cytoplasm. The protein resides in the host nucleus. Functionally, plays a critical role in cytoplasmic virus egress. Participates in the final step of tegumentation and envelope acquisition within the host cytoplasm by directly interacting with the capsid. Upon virion binding to target cell, a signaling cascade is triggered to disrupt the interaction with the capsid, thereby preparing capsid uncoating. The chain is Cytoplasmic envelopment protein 2 from Equine herpesvirus 1 (strain V592) (EHV-1).